Here is a 276-residue protein sequence, read N- to C-terminus: Formamidopyrimidine-DNA glycosylase (276 aa).

The active-site Schiff-base intermediate with DNA is the proline 2. Residue glutamate 3 is the Proton donor of the active site. Lysine 58 (proton donor; for beta-elimination activity) is an active-site residue. DNA-binding residues include histidine 92, arginine 111, and lysine 154. The segment at glutamine 239–valine 273 adopts an FPG-type zinc-finger fold. Catalysis depends on arginine 263, which acts as the Proton donor; for delta-elimination activity.

This sequence belongs to the FPG family. Monomer. Zn(2+) is required as a cofactor.

The catalysed reaction is Hydrolysis of DNA containing ring-opened 7-methylguanine residues, releasing 2,6-diamino-4-hydroxy-5-(N-methyl)formamidopyrimidine.. It carries out the reaction 2'-deoxyribonucleotide-(2'-deoxyribose 5'-phosphate)-2'-deoxyribonucleotide-DNA = a 3'-end 2'-deoxyribonucleotide-(2,3-dehydro-2,3-deoxyribose 5'-phosphate)-DNA + a 5'-end 5'-phospho-2'-deoxyribonucleoside-DNA + H(+). In terms of biological role, involved in base excision repair of DNA damaged by oxidation or by mutagenic agents. Acts as a DNA glycosylase that recognizes and removes damaged bases. Has a preference for oxidized purines, such as 7,8-dihydro-8-oxoguanine (8-oxoG). Has AP (apurinic/apyrimidinic) lyase activity and introduces nicks in the DNA strand. Cleaves the DNA backbone by beta-delta elimination to generate a single-strand break at the site of the removed base with both 3'- and 5'-phosphates. This is Formamidopyrimidine-DNA glycosylase from Lactobacillus acidophilus (strain ATCC 700396 / NCK56 / N2 / NCFM).